We begin with the raw amino-acid sequence, 465 residues long: Protein hedgehog (465 aa).

Cys-79 carries the N-palmitoyl cysteine lipid modification. Positions 143, 144, 149, 179, 180, 183, and 185 each coordinate Ca(2+). A lipid anchor (Cholesterol glycine ester) is attached at Gly-251.

It belongs to the hedgehog family. Interacts with shf. Post-translationally, the C-terminal part of the hedgehog protein precursor displays an autoproteolysis activity that results in the cleavage of the full-length protein into two parts (N-product and C-product). In addition, the C-terminal part displays a cholesterol transferase activity that results by the covalent attachment of a cholesterol moiety to the C-terminal of the newly generated N-product. The N-product is the active species in both local and long-range signaling, whereas the C-product has no signaling activity. Cholesterylation is required for N-product targeting to lipid rafts and multimerization. In terms of processing, N-palmitoylation by Rasp of the hedgehog N-product, within the secretory pathway, is required for the embryonic and larval patterning activities of the hedgehog signal.

The protein resides in the nucleus. Its subcellular location is the cytoplasm. The protein localises to the cell membrane. It carries out the reaction glycyl-L-cysteinyl-[protein] + cholesterol + H(+) = [protein]-C-terminal glycyl cholesterol ester + N-terminal L-cysteinyl-[protein]. In terms of biological role, the C-terminal part of the hedgehog protein precursor displays an autoproteolysis activity that results in the cleavage of the full-length protein into two parts (N-product and C-product). In addition, the C-terminal part displays a cholesterol transferase activity that results by the covalent attachment of a cholesterol moiety to the C-terminal of the newly generated N-product. Once cleaved, the C-product has no signaling activity and diffuses from the cell. Its function is as follows. The dually lipidated hedgehog protein N-product is a morphogen which is essential for a variety of patterning events during development. Establishes the anterior-posterior axis of the embryonic segments and patterns the larval imaginal disks. Binds to the patched (ptc) receptor, which functions in association with smoothened (smo), to activate the transcription of target genes wingless (wg), decapentaplegic (dpp) and ptc. In the absence of hh, ptc represses the constitutive signaling activity of smo through fused (fu). Essential component of a signaling pathway which regulates the Duox-dependent gut immune response to bacterial uracil; required to activate Cad99C-dependent endosome formation, norpA-dependent Ca2+ mobilization and p38 MAPK, which are essential steps in the Duox-dependent production of reactive oxygen species (ROS) in response to intestinal bacterial infection. During photoreceptor differentiation, it up-regulates transcription of Ubr3, which in turn promotes the hh-signaling pathway by mediating the ubiquitination and degradation of cos. The sequence is that of Protein hedgehog from Drosophila sechellia (Fruit fly).